A 378-amino-acid chain; its full sequence is Cytochrome b (378 aa).

A run of 4 helical transmembrane segments spans residues 34–54 (FGSLLGLCLIIQILTGLFLAM), 78–99 (WFLRICHANGASFFFACLFIHV), 114–134 (WMIGVIILFMVMATGFLGYVL), and 179–199 (FFTFHFILPFIVLALTMIHLL). The heme b site is built by histidine 84 and histidine 98. Heme b is bound by residues histidine 183 and histidine 197. Residue histidine 202 participates in a ubiquinone binding. The next 4 membrane-spanning stretches (helical) occupy residues 227-247 (YKDIVGFIIFMWILIGFIWKF), 289-309 (LGGVIALVLSIAILMILPFTH), 321-341 (LNQILFWNMVIVASLLTWIGA), and 348-368 (YVLTGQILTVLYFSYFIINPL).

This sequence belongs to the cytochrome b family. As to quaternary structure, the main subunits of complex b-c1 are: cytochrome b, cytochrome c1 and the Rieske protein. Heme b is required as a cofactor.

The protein resides in the mitochondrion inner membrane. Functionally, component of the ubiquinol-cytochrome c reductase complex (complex III or cytochrome b-c1 complex) that is part of the mitochondrial respiratory chain. The b-c1 complex mediates electron transfer from ubiquinol to cytochrome c. Contributes to the generation of a proton gradient across the mitochondrial membrane that is then used for ATP synthesis. The polypeptide is Cytochrome b (Aedes aegypti (Yellowfever mosquito)).